Here is a 251-residue protein sequence, read N- to C-terminus: tRNA-cytidine(32) 2-sulfurtransferase 1 (251 aa).

Positions 33-38 (SGGKDS) match the PP-loop motif motif. Residues Cys-108, Cys-111, and Cys-199 each contribute to the [4Fe-4S] cluster site.

It belongs to the TtcA family. In terms of assembly, homodimer. Mg(2+) is required as a cofactor. [4Fe-4S] cluster serves as cofactor.

The protein localises to the cytoplasm. The catalysed reaction is cytidine(32) in tRNA + S-sulfanyl-L-cysteinyl-[cysteine desulfurase] + AH2 + ATP = 2-thiocytidine(32) in tRNA + L-cysteinyl-[cysteine desulfurase] + A + AMP + diphosphate + H(+). It participates in tRNA modification. In terms of biological role, catalyzes the ATP-dependent 2-thiolation of cytidine in position 32 of tRNA, to form 2-thiocytidine (s(2)C32). The sulfur atoms are provided by the cysteine/cysteine desulfurase (IscS) system. This Francisella tularensis subsp. holarctica (strain FTNF002-00 / FTA) protein is tRNA-cytidine(32) 2-sulfurtransferase 1.